A 395-amino-acid polypeptide reads, in one-letter code: Flagellin D (395 aa).

Belongs to the bacterial flagellin family.

It is found in the secreted. Its subcellular location is the bacterial flagellum. Its function is as follows. Flagellin is the subunit protein which polymerizes to form the filaments of bacterial flagella. The polypeptide is Flagellin D (flaD) (Rhizobium meliloti (Ensifer meliloti)).